The chain runs to 161 residues: uncharacterized protein (161 aa).

This is an uncharacterized protein from Homo sapiens (Human).